The sequence spans 42 residues: MKVKGSLKSHRNRDKNCKVVKRGGKIYIINKVKPRCKARQGS.

Belongs to the bacterial ribosomal protein bL36 family.

This Wolbachia pipientis wMel protein is Large ribosomal subunit protein bL36.